The primary structure comprises 563 residues: (-)-germacrene D synthase (563 aa).

The stretch at 44–71 (TEITAAEKEELEKQKEKVKNLLDQTPND) forms a coiled coil. Mn(2+)-binding residues include D314 and D318. The DDXXD motif signature appears at 314-318 (DDIYD). Homodimerization regions lie at residues 320 to 326 (YGSLDEL) and 392 to 429 (EAEWCFSKYFPTMEEYMKQALVSGAYMMLSTTSLVGME). Mn(2+) is bound by residues D459 and E467.

This sequence belongs to the terpene synthase family. As to quaternary structure, homodimer. It depends on Mn(2+) as a cofactor. Mg(2+) is required as a cofactor. As to expression, expressed in peltate glandular trichomes. Present at low levels in flowers, leaves and stems.

It carries out the reaction (2E,6E)-farnesyl diphosphate = (-)-germacrene D + diphosphate. It participates in secondary metabolite biosynthesis; terpenoid biosynthesis. Functionally, involved in the biosynthesis of phenolic sesquiterpenes natural products. Sesquiterpene synthase that catalyzes mainly the formation of (-)-germacrene D and minor amounts of other sesquiterpenes (e.g. bicyclo-germacrene) from farnesyl diphosphate (FPP). Also triggers moderate amounts formation of myrcene, limonene, terpinolene and linalool in the presence of geranyl diphosphate (GPP). The protein is (-)-germacrene D synthase of Origanum vulgare (Wild marjoram).